We begin with the raw amino-acid sequence, 128 residues long: T-cell leukemia/lymphoma protein 1B (128 aa).

It belongs to the TCL1 family. Interacts with AKT1 and AKT2 (via PH domain). Does not interact with AKT3. Expressed in a variety of tissues including placenta and testis.

Functionally, enhances the phosphorylation and activation of AKT1 and AKT2. The chain is T-cell leukemia/lymphoma protein 1B (TCL1B) from Homo sapiens (Human).